We begin with the raw amino-acid sequence, 433 residues long: Forkhead box protein A2-B (433 aa).

Positions 147–241 (KPPYSYISLI…ENGCYLRRQK (95 aa)) form a DNA-binding region, fork-head. Residues 247–260 (KKPSLREGGGKKLS) are compositionally biased toward basic and acidic residues. Disordered stretches follow at residues 247–337 (KKPS…QSHL) and 407–433 (SGLE…MNSS). Residues 261 to 282 (EGASSVGSVGNSSSERSVGNES) are compositionally biased toward low complexity. Residues 292-302 (EQKRSLVDMKS) show a composition bias toward basic and acidic residues. Residues 315–331 (ASQAQHLLSQHHSVLSH) are compositionally biased toward low complexity. The span at 407–421 (SGLEPSPISSDTSYY) shows a compositional bias: polar residues.

It localises to the nucleus. Functionally, acts as a transcriptional activator during early development, limiting the extent of mesoderm formation in the gastrula. Binds to DNA via the target sequence 5'-GT[AC]AACA-3', with 5'-GTAAACA-3' being the preferred binding site. In Xenopus laevis (African clawed frog), this protein is Forkhead box protein A2-B (foxa2-b).